An 819-amino-acid polypeptide reads, in one-letter code: Meiotically up-regulated gene 45 protein (819 aa).

A helical membrane pass occupies residues 797 to 817 (AMCLLTLLIGIYLILQVVFIY).

The protein localises to the membrane. Functionally, has a role in meiosis. In Schizosaccharomyces pombe (strain 972 / ATCC 24843) (Fission yeast), this protein is Meiotically up-regulated gene 45 protein (mug45).